Reading from the N-terminus, the 195-residue chain is Peptide deformylase (195 aa).

Residues C102 and H144 each coordinate Fe cation. E145 is an active-site residue. H148 contacts Fe cation.

It belongs to the polypeptide deformylase family. Requires Fe(2+) as cofactor.

It carries out the reaction N-terminal N-formyl-L-methionyl-[peptide] + H2O = N-terminal L-methionyl-[peptide] + formate. Its function is as follows. Removes the formyl group from the N-terminal Met of newly synthesized proteins. Requires at least a dipeptide for an efficient rate of reaction. N-terminal L-methionine is a prerequisite for activity but the enzyme has broad specificity at other positions. The protein is Peptide deformylase of Salinibacter ruber (strain DSM 13855 / M31).